Here is a 253-residue protein sequence, read N- to C-terminus: 5'/3'-nucleotidase SurE (253 aa).

The a divalent metal cation site is built by Asp8, Asp9, Ser39, and Asn92.

This sequence belongs to the SurE nucleotidase family. The cofactor is a divalent metal cation.

It localises to the cytoplasm. It catalyses the reaction a ribonucleoside 5'-phosphate + H2O = a ribonucleoside + phosphate. The catalysed reaction is a ribonucleoside 3'-phosphate + H2O = a ribonucleoside + phosphate. The enzyme catalyses [phosphate](n) + H2O = [phosphate](n-1) + phosphate + H(+). Functionally, nucleotidase with a broad substrate specificity as it can dephosphorylate various ribo- and deoxyribonucleoside 5'-monophosphates and ribonucleoside 3'-monophosphates with highest affinity to 3'-AMP. Also hydrolyzes polyphosphate (exopolyphosphatase activity) with the preference for short-chain-length substrates (P20-25). Might be involved in the regulation of dNTP and NTP pools, and in the turnover of 3'-mononucleotides produced by numerous intracellular RNases (T1, T2, and F) during the degradation of various RNAs. This is 5'/3'-nucleotidase SurE from Serratia proteamaculans (strain 568).